The sequence spans 292 residues: uncharacterized protein (292 aa).

Residues 13–35 (LFILFIIVVCIYLLPRVAINAFY) traverse the membrane as a helical segment.

This sequence belongs to the serine esterase family.

The protein resides in the membrane. This is an uncharacterized protein from Salmonella typhimurium (strain LT2 / SGSC1412 / ATCC 700720).